Reading from the N-terminus, the 703-residue chain is Elongation factor G (703 aa).

One can recognise a tr-type G domain in the interval 9-292 (ERTRNIGIMA…AVVDYLPGPL (284 aa)). Residues 18–25 (AHIDAGKT), 91–95 (DTPGH), and 145–148 (NKMD) each bind GTP.

It belongs to the TRAFAC class translation factor GTPase superfamily. Classic translation factor GTPase family. EF-G/EF-2 subfamily.

Its subcellular location is the cytoplasm. Its function is as follows. Catalyzes the GTP-dependent ribosomal translocation step during translation elongation. During this step, the ribosome changes from the pre-translocational (PRE) to the post-translocational (POST) state as the newly formed A-site-bound peptidyl-tRNA and P-site-bound deacylated tRNA move to the P and E sites, respectively. Catalyzes the coordinated movement of the two tRNA molecules, the mRNA and conformational changes in the ribosome. In Leuconostoc citreum (strain KM20), this protein is Elongation factor G.